We begin with the raw amino-acid sequence, 1135 residues long: Envelopment polyprotein (1135 aa).

Positions 1–18 (MGIWKWLVMASLVWPVLT) are cleaved as a signal peptide. Over 19–485 (LRNVYDMKIE…VPGFHGWATA (467 aa)) the chain is Lumenal. 11 disulfide bridges follow: C29–C151, C63–C157, C109–C128, C133–C138, C175–C185, C210–C247, C234–C351, C376–C435, C380–C389, C405–C424, and C452–C475. N134 carries N-linked (GlcNAc...) asparagine; by host glycosylation. 2 N-linked (GlcNAc...) asparagine; by host glycosylation sites follow: N235 and N347. N399 carries N-linked (GlcNAc...) asparagine; by host glycosylation. Residues 486–506 (ALLVTFCFGWVLIPAITFIIL) traverse the membrane as a helical segment. Over 507 to 627 (TILKFIANIF…LNLFRYKSRC (121 aa)) the chain is Cytoplasmic. Residues 516 to 533 (FHTSNQENRLKSVLRKIK) form a binding to the ribonucleoprotein region. 2 CCHC-type zinc fingers span residues 545-565 (CDVCKYECETYKELKAHGVSC) and 570-591 (CPYCFTHCEPTEAAFQAHYKVC). Binding to the ribonucleoprotein stretches follow at residues 588-605 (YKVCQVTHRFRDDLKKTV), 592-603 (QVTHRFRDDLKK), and 611-625 (TPGCYRTLNLFRYKS). Positions 611–634 (TPGCYRTLNLFRYKSRCYIFTMWI) constitute an ITAM domain. Positions 615-618 (YRTL) match the YxxL motif. Residues 628–648 (YIFTMWIFLLVLESILWAASA) traverse the membrane as a helical segment. The Lumenal portion of the chain corresponds to 649 to 1105 (SETPLTPVWN…EWISGIFSGN (457 aa)). Cystine bridges form between C735–C770, C739–C777, C751–C885, C765–C896, C780–C904, C806–C815, C823–C832, and C863–C867. The tract at residues 757–777 (YQYETSWGCNPSDCPGVGTGC) is fusion loop. N928 carries an N-linked (GlcNAc...) asparagine; by host glycan. 5 disulfide bridges follow: C970-C1000, C993-C1045, C1010-C1015, C1046-C1051, and C1085-C1089. The chain crosses the membrane as a helical span at residues 1106–1126 (WIVLIVLCVFLLFSLVLLSIL). The binding to the ribonucleoprotein stretch occupies residues 1122 to 1135 (LLSILCPVRKHKKS). Residues 1127 to 1135 (CPVRKHKKS) lie on the Cytoplasmic side of the membrane.

It belongs to the hantavirus envelope glycoprotein family. Homodimer. Homotetramer; forms heterotetrameric Gn-Gc spikes in the pre-fusion conformation. Interacts (via C-terminus) with the nucleoprotein. Interacts with host TUFM; this interaction contributes to the virus-induced degradation of mitochondria by autophagy, which leads to degradation of host MAVS and inhibition of type I interferon (IFN) responses. Interacts with host MAP1LC3B; this interaction contributes to the virus-induced degradation of mitochondria by autophagy, which leads to degradation of host MAVS and inhibition of type I interferon (IFN) responses. In terms of assembly, homodimer. Homotetramer; forms heterotetrameric Gn-Gc spikes in the pre-fusion conformation. Homotrimer; forms homotrimer in the post-fusion conformation at acidic pH. Interacts (via C-terminus) with the nucleoprotein. Post-translationally, envelope polyprotein precursor is quickly cleaved in vivo just after synthesis, presumably by host signal peptidase.

It localises to the virion membrane. Its subcellular location is the host cell surface. It is found in the host Golgi apparatus membrane. The protein localises to the host endoplasmic reticulum membrane. The protein resides in the host mitochondrion. In terms of biological role, forms homotetramers with glycoprotein C at the surface of the virion. Attaches the virion to host cell receptors including integrin ITGAV/ITGB3. This attachment induces virion internalization predominantly through clathrin-dependent endocytosis. May also bind to host C1QBP for virus entry into the host cell. Mediates the assembly and budding of infectious virus particles through its interaction with the nucleocapsid protein and the viral genome. May dysregulate normal immune and endothelial cell responses through an ITAM motif. Translocates to mitochondria, binds to host TUFM and recruits MAP1LC3B. These interactions induce mitochondrial autophagy and therefore destruction of host MAVS leading to inhibition of type I interferon (IFN) responses. Concomitant breakdown of glycoprotein N is apparently prevented by the nucleoprotein that may inhibit Gn-stimulated autophagosome-lysosome fusion. Interacts with the viral genomic RNA. Functionally, forms homotetramers with glycoprotein N at the surface of the virion. Attaches the virion to host cell receptors including integrin ITGAV/ITGB3. This attachment induces virion internalization predominantly through clathrin-dependent endocytosis. May also bind to host C1QBP for virus entry into the host cell. Class II fusion protein that promotes fusion of viral membrane with host endosomal membrane after endocytosis of the virion. The protein is Envelopment polyprotein (GP) of Hantaan virus (strain Lee) (Lee virus).